Here is a 313-residue protein sequence, read N- to C-terminus: Ribose-phosphate pyrophosphokinase (313 aa).

ATP contacts are provided by residues 37–39 (DGE) and 96–97 (RQ). Mg(2+) is bound by residues His-131 and Asp-170. Lys-193 is a catalytic residue. Residues Arg-195, Asp-219, and 223–227 (DTAGT) each bind D-ribose 5-phosphate.

This sequence belongs to the ribose-phosphate pyrophosphokinase family. Class I subfamily. Homohexamer. The cofactor is Mg(2+).

Its subcellular location is the cytoplasm. It carries out the reaction D-ribose 5-phosphate + ATP = 5-phospho-alpha-D-ribose 1-diphosphate + AMP + H(+). It functions in the pathway metabolic intermediate biosynthesis; 5-phospho-alpha-D-ribose 1-diphosphate biosynthesis; 5-phospho-alpha-D-ribose 1-diphosphate from D-ribose 5-phosphate (route I): step 1/1. Its function is as follows. Involved in the biosynthesis of the central metabolite phospho-alpha-D-ribosyl-1-pyrophosphate (PRPP) via the transfer of pyrophosphoryl group from ATP to 1-hydroxyl of ribose-5-phosphate (Rib-5-P). The chain is Ribose-phosphate pyrophosphokinase from Pseudomonas aeruginosa (strain ATCC 15692 / DSM 22644 / CIP 104116 / JCM 14847 / LMG 12228 / 1C / PRS 101 / PAO1).